The chain runs to 146 residues: Cystatin-C (146 aa).

Residues 1–26 (MAGPLRAPLLLLAILAVALAVSPAAG) form the signal peptide. Position 43 is a phosphoserine; by FAM20C (serine 43). The short motif at 81-85 (QIVAG) is the Secondary area of contact element. 2 disulfide bridges follow: cysteine 99–cysteine 109 and cysteine 123–cysteine 143.

Belongs to the cystatin family. As to quaternary structure, homodimer. Post-translationally, the Thr-25 variant is O-glycosylated with a core 1 or possibly core 8 glycan. The signal peptide of the O-glycosylated Thr-25 variant is cleaved between Ala-20 and Val-21. Expressed in submandibular and sublingual saliva but not in parotid saliva (at protein level). Expressed in various body fluids, such as the cerebrospinal fluid and plasma. Expressed in highest levels in the epididymis, vas deferens, brain, thymus, and ovary and the lowest in the submandibular gland.

It is found in the secreted. In terms of biological role, as an inhibitor of cysteine proteinases, this protein is thought to serve an important physiological role as a local regulator of this enzyme activity. This chain is Cystatin-C (CST3), found in Homo sapiens (Human).